The chain runs to 541 residues: Nectin 1b (541 aa).

Positions 1–21 (MDKQESFFVGHKSHRCSQNRS) are cleaved as a signal peptide. Topologically, residues 22-396 (VSQIHQRTSR…PAELHSSGAA (375 aa)) are extracellular. N51, N105, N180, N242, N326, N337, and N372 each carry an N-linked (GlcNAc...) asparagine glycan. In terms of domain architecture, Ig-like V-type spans 77–182 (GDTVELKCLF…GNRENMVNLT (106 aa)). A disulfide bridge connects residues C84 and C165. Ig-like C2-type domains are found at residues 187–282 (PVTK…VILN) and 287–374 (PEVK…VNVT). 2 disulfides stabilise this stretch: C212–C266 and C309–C356. A helical membrane pass occupies residues 397-417 (IGGAVGGVALLVAAIALLVFF). Residues 418 to 541 (LRRRQRTFKG…SVISKKEWYV (124 aa)) lie on the Cytoplasmic side of the membrane. A disordered region spans residues 440-507 (YSKAGGMPAH…VDEGESRDYD (68 aa)). Over residues 479 to 493 (SGDRDFDGNSEDLKR) the composition is skewed to basic and acidic residues.

It belongs to the nectin family. Cis- and trans-homodimer. Can form trans-heterodimers. Expressed in the developing eye and nervous system.

The protein resides in the cell membrane. It is found in the cell junction. Its subcellular location is the adherens junction. Cell adhesion molecule that promotes cell-cell contacts and plays important roles in the development of the nervous system. Acts by forming homophilic or heterophilic trans-dimers. This is Nectin 1b from Danio rerio (Zebrafish).